We begin with the raw amino-acid sequence, 485 residues long: Ribulose bisphosphate carboxylase large chain (485 aa).

Residues asparagine 124 and threonine 174 each contribute to the substrate site. The active-site Proton acceptor is the lysine 176. Residue lysine 178 coordinates substrate. Lysine 202, aspartate 204, and glutamate 205 together coordinate Mg(2+). Lysine 202 carries the N6-carboxylysine modification. The Proton acceptor role is filled by histidine 294. 3 residues coordinate substrate: arginine 295, histidine 327, and serine 379.

This sequence belongs to the RuBisCO large chain family. Type I subfamily. Heterohexadecamer of 8 large chains and 8 small chains. It depends on Mg(2+) as a cofactor.

It catalyses the reaction 2 (2R)-3-phosphoglycerate + 2 H(+) = D-ribulose 1,5-bisphosphate + CO2 + H2O. The catalysed reaction is D-ribulose 1,5-bisphosphate + O2 = 2-phosphoglycolate + (2R)-3-phosphoglycerate + 2 H(+). Its function is as follows. RuBisCO catalyzes two reactions: the carboxylation of D-ribulose 1,5-bisphosphate, the primary event in carbon dioxide fixation, as well as the oxidative fragmentation of the pentose substrate. Both reactions occur simultaneously and in competition at the same active site. This Rhodopseudomonas palustris (strain HaA2) protein is Ribulose bisphosphate carboxylase large chain.